A 382-amino-acid chain; its full sequence is Succinate--CoA ligase [ADP-forming] subunit beta (382 aa).

Residues 9-240 (KELFSKYGVK…PRDVSEFEMY (232 aa)) enclose the ATP-grasp domain. ATP contacts are provided by residues lysine 45, 52 to 54 (GRG), valine 94, and glutamate 99. Mg(2+)-binding residues include asparagine 193 and aspartate 207. Residues asparagine 260 and 317–319 (GIT) contribute to the substrate site.

This sequence belongs to the succinate/malate CoA ligase beta subunit family. Heterotetramer of two alpha and two beta subunits. Requires Mg(2+) as cofactor.

It catalyses the reaction succinate + ATP + CoA = succinyl-CoA + ADP + phosphate. The catalysed reaction is GTP + succinate + CoA = succinyl-CoA + GDP + phosphate. Its pathway is carbohydrate metabolism; tricarboxylic acid cycle; succinate from succinyl-CoA (ligase route): step 1/1. Its function is as follows. Succinyl-CoA synthetase functions in the citric acid cycle (TCA), coupling the hydrolysis of succinyl-CoA to the synthesis of either ATP or GTP and thus represents the only step of substrate-level phosphorylation in the TCA. The beta subunit provides nucleotide specificity of the enzyme and binds the substrate succinate, while the binding sites for coenzyme A and phosphate are found in the alpha subunit. The protein is Succinate--CoA ligase [ADP-forming] subunit beta of Pyrobaculum arsenaticum (strain DSM 13514 / JCM 11321 / PZ6).